The primary structure comprises 432 residues: Glutamate-1-semialdehyde 2,1-aminomutase 1 (432 aa).

N6-(pyridoxal phosphate)lysine is present on K268.

This sequence belongs to the class-III pyridoxal-phosphate-dependent aminotransferase family. HemL subfamily. As to quaternary structure, homodimer. Requires pyridoxal 5'-phosphate as cofactor.

It localises to the cytoplasm. The enzyme catalyses (S)-4-amino-5-oxopentanoate = 5-aminolevulinate. It participates in porphyrin-containing compound metabolism; protoporphyrin-IX biosynthesis; 5-aminolevulinate from L-glutamyl-tRNA(Glu): step 2/2. The chain is Glutamate-1-semialdehyde 2,1-aminomutase 1 from Bacillus cereus (strain B4264).